The following is a 161-amino-acid chain: Protein PLANT CADMIUM RESISTANCE 12 (161 aa).

Residues 71–89 (AGLIHLALGFIGCSWLYAF) form a helical membrane-spanning segment.

Belongs to the cornifelin family.

It localises to the membrane. In terms of biological role, may be involved in heavy metals transport. In Arabidopsis thaliana (Mouse-ear cress), this protein is Protein PLANT CADMIUM RESISTANCE 12 (PCR12).